A 92-amino-acid chain; its full sequence is Small ribosomal subunit protein bS16 (92 aa).

The protein belongs to the bacterial ribosomal protein bS16 family.

The chain is Small ribosomal subunit protein bS16 from Desulforudis audaxviator (strain MP104C).